Here is a 232-residue protein sequence, read N- to C-terminus: Multiple organellar RNA editing factor 6, mitochondrial (232 aa).

A mitochondrion-targeting transit peptide spans 1–67 (MAKTLSRSTA…TIRTRMDRSG (67 aa)). The disordered stretch occupies residues 208-232 (TNQRGSDKPKYHDRIRNVRRRENMR). Residues 212–232 (GSDKPKYHDRIRNVRRRENMR) show a composition bias toward basic and acidic residues.

The protein belongs to the MORF family. As to quaternary structure, heterodimers with MORF8/RIP1, MORF3/RIP3, MORF6/RIP6, MORF7/RIP7 and MORF9/RIP9.

Its subcellular location is the mitochondrion. Functionally, involved in organellar RNA editing. Required for the processing of few RNA editing sites in mitochondria. In Arabidopsis thaliana (Mouse-ear cress), this protein is Multiple organellar RNA editing factor 6, mitochondrial.